The chain runs to 357 residues: Phenylalanine--tRNA ligase alpha subunit (357 aa).

A Mg(2+)-binding site is contributed by Glu257.

This sequence belongs to the class-II aminoacyl-tRNA synthetase family. Phe-tRNA synthetase alpha subunit type 1 subfamily. As to quaternary structure, tetramer of two alpha and two beta subunits. Requires Mg(2+) as cofactor.

Its subcellular location is the cytoplasm. It carries out the reaction tRNA(Phe) + L-phenylalanine + ATP = L-phenylalanyl-tRNA(Phe) + AMP + diphosphate + H(+). The sequence is that of Phenylalanine--tRNA ligase alpha subunit from Ruegeria sp. (strain TM1040) (Silicibacter sp.).